A 233-amino-acid chain; its full sequence is Lipoprotein-releasing system ATP-binding protein LolD (233 aa).

An ABC transporter domain is found at 6 to 233 (LQCDNLCKRY…TAELSLMGAE (228 aa)). Residue 42–49 (GSSGSGKS) participates in ATP binding.

This sequence belongs to the ABC transporter superfamily. Lipoprotein translocase (TC 3.A.1.125) family. As to quaternary structure, the complex is composed of two ATP-binding proteins (LolD) and two transmembrane proteins (LolC and LolE).

It localises to the cell inner membrane. Part of the ABC transporter complex LolCDE involved in the translocation of mature outer membrane-directed lipoproteins, from the inner membrane to the periplasmic chaperone, LolA. Responsible for the formation of the LolA-lipoprotein complex in an ATP-dependent manner. This Salmonella paratyphi A (strain ATCC 9150 / SARB42) protein is Lipoprotein-releasing system ATP-binding protein LolD.